We begin with the raw amino-acid sequence, 318 residues long: MSNKSNDNGRAYEFAFINELGRIATQNQNINIEKNSSYYVVEKSWSTLSDLEKEKYTKSAIAGINLITSLEPIIEDGNGVLNLKIQADNKGELGDIRDILIQRENINWEIGLSLKHNHFAVKHSRLSHKIDFSEKWFQLPSSQNYWDNILPIFEKLEIYKKDKIKWRELSNKEDCIYYPILKSFIAEIKEKYDKYNSIVPQRMVEYLLGYFDFYKIISQDNKKLTSIQSFNLRGTLNKPSKKRKADIFIPVANLPTRIIDIDFKPNSKNTVELYLDKGWQFSFRIHNASTIIEPSLKFDIKLIGVPATIICLETPWEE.

It carries out the reaction Endonucleolytic cleavage of DNA to give specific double-stranded fragments with terminal 5'-phosphates.. Functionally, a P subtype restriction enzyme that recognizes the double-stranded sequence 5'-GGCC-3' and cleaves after G-2. The polypeptide is Type II restriction enzyme HaeIII (haeIIIR) (Haemophilus aegyptius).